A 407-amino-acid polypeptide reads, in one-letter code: Dephospho-CoA kinase (407 aa).

In terms of domain architecture, DPCK spans 3–201; it reads RIGLTGGIGA…ERIVPFAHNL (199 aa). 11-16 provides a ligand contact to ATP; the sequence is GAGKSA. Positions 196–407 are UPF0157; sequence PFAHNLSTRQ…DWADSTGWKP (212 aa).

This sequence in the N-terminal section; belongs to the CoaE family. In the C-terminal section; belongs to the UPF0157 (GrpB) family.

The protein resides in the cytoplasm. It carries out the reaction 3'-dephospho-CoA + ATP = ADP + CoA + H(+). Its pathway is cofactor biosynthesis; coenzyme A biosynthesis; CoA from (R)-pantothenate: step 5/5. Its function is as follows. Catalyzes the phosphorylation of the 3'-hydroxyl group of dephosphocoenzyme A to form coenzyme A. This chain is Dephospho-CoA kinase, found in Mycolicibacterium paratuberculosis (strain ATCC BAA-968 / K-10) (Mycobacterium paratuberculosis).